Consider the following 183-residue polypeptide: Glutathione-regulated potassium-efflux system ancillary protein KefG (183 aa).

Belongs to the NAD(P)H dehydrogenase (quinone) family. KefG subfamily. Interacts with KefB.

Its subcellular location is the cell inner membrane. It carries out the reaction a quinone + NADH + H(+) = a quinol + NAD(+). It catalyses the reaction a quinone + NADPH + H(+) = a quinol + NADP(+). Regulatory subunit of a potassium efflux system that confers protection against electrophiles. Required for full activity of KefB. The chain is Glutathione-regulated potassium-efflux system ancillary protein KefG from Enterobacter sp. (strain 638).